Reading from the N-terminus, the 1064-residue chain is Serine/threonine protein kinase KIN1 (1064 aa).

The segment at 1–113 (MDDYHVNTAF…SSQGMPKQFH (113 aa)) is disordered. The segment covering 8–36 (TAFSMGRGNQQDDGNSESNSMHTQPSTMA) has biased composition (polar residues). Over residues 74-91 (AEQKERQVELEGKSRENA) the composition is skewed to basic and acidic residues. Positions 93-108 (KPNTTSQSRVSSSQGM) are enriched in polar residues. In terms of domain architecture, Protein kinase spans 120–398 (WEFVETVGAG…LKQVVEHHWM (279 aa)). Residues 126 to 134 (VGAGSMGKV) and Lys149 contribute to the ATP site. The active-site Proton acceptor is Asp269. Ser534 is modified (phosphoserine). Residues 549 to 621 (SEPEATLATK…SPTPQGNDYQ (73 aa)) are disordered. Residues 557-571 (TKDTSVPFTPKNSDG) show a composition bias toward polar residues. Ser593 bears the Phosphoserine mark. Residues 598 to 608 (KSSDNQRREME) are compositionally biased toward basic and acidic residues. The residue at position 646 (Ser646) is a Phosphoserine. Disordered regions lie at residues 652–672 (TIEQTSVNSNNSINKPVQKTH), 694–714 (MNEPVKTNDSRGGNKGDFPAL), 762–797 (EGSDDDENHPLPPLNVAKGRKLHPSARAKSVGHARR), 823–843 (LESSDDNKSDSLGNVTSQTND), and 958–1016 (HESI…GMTT). Over residues 654 to 670 (EQTSVNSNNSINKPVQK) the composition is skewed to polar residues. The residue at position 764 (Ser764) is a Phosphoserine. Positions 779–794 (KGRKLHPSARAKSVGH) are enriched in basic residues. Polar residues-rich tracts occupy residues 832–843 (DSLGNVTSQTND), 963–989 (RQGSNKYSPSSPLTTNSIHQRKTSITE), and 998–1016 (GTSLENIHQQGDGSEGMTT). Phosphoserine is present on Ser986. The KA1 domain occupies 1015 to 1064 (TTTEKEPIKFEIHIVKVRIVGLAGVHFKKISGNTWLYKELASSILKELKL).

The protein belongs to the protein kinase superfamily. CAMK Ser/Thr protein kinase family. NIM1 subfamily. As to quaternary structure, interacts with SEC9 and SRO7. In terms of processing, autophosphorylated.

The protein resides in the cytoplasm. It is found in the cell membrane. It carries out the reaction L-seryl-[protein] + ATP = O-phospho-L-seryl-[protein] + ADP + H(+). The enzyme catalyses L-threonyl-[protein] + ATP = O-phospho-L-threonyl-[protein] + ADP + H(+). Serine/threonine protein kinase involved in the regulation of exocytosis. Induces phosphorylation of SEC9 and its release from the plasma membrane to the cytosol. The sequence is that of Serine/threonine protein kinase KIN1 (KIN1) from Saccharomyces cerevisiae (strain ATCC 204508 / S288c) (Baker's yeast).